We begin with the raw amino-acid sequence, 243 residues long: UPF0246 protein spyM18_2163 (243 aa).

The protein belongs to the UPF0246 family.

The sequence is that of UPF0246 protein spyM18_2163 from Streptococcus pyogenes serotype M18 (strain MGAS8232).